Reading from the N-terminus, the 414-residue chain is uncharacterized protein (414 aa).

Disordered regions lie at residues 136-168 (SSKSMTPTAEKQLEKPLENGSELQEGDSLTVPT), 297-333 (PQNFPNSGMQRAVQAPRPQNKMSYHRNNKNRNAENAS), and 346-414 (ALNA…NGSK). Positions 350 to 359 (PSRSRPTHGS) are enriched in polar residues. Basic and acidic residues predominate over residues 399 to 414 (SKSEKIYPEPRRNGSK).

This is an uncharacterized protein from Homo sapiens (Human).